The sequence spans 188 residues: Elongation factor P (188 aa).

Belongs to the elongation factor P family.

It is found in the cytoplasm. It functions in the pathway protein biosynthesis; polypeptide chain elongation. Functionally, involved in peptide bond synthesis. Stimulates efficient translation and peptide-bond synthesis on native or reconstituted 70S ribosomes in vitro. Probably functions indirectly by altering the affinity of the ribosome for aminoacyl-tRNA, thus increasing their reactivity as acceptors for peptidyl transferase. In Exiguobacterium sibiricum (strain DSM 17290 / CCUG 55495 / CIP 109462 / JCM 13490 / 255-15), this protein is Elongation factor P.